The sequence spans 174 residues: NADH-quinone oxidoreductase subunit B 2 (174 aa).

Cysteine 51, cysteine 52, cysteine 116, and cysteine 145 together coordinate [4Fe-4S] cluster.

This sequence belongs to the complex I 20 kDa subunit family. In terms of assembly, NDH-1 is composed of 14 different subunits. Subunits NuoB, C, D, E, F, and G constitute the peripheral sector of the complex. [4Fe-4S] cluster serves as cofactor.

The protein resides in the cell inner membrane. It catalyses the reaction a quinone + NADH + 5 H(+)(in) = a quinol + NAD(+) + 4 H(+)(out). Functionally, NDH-1 shuttles electrons from NADH, via FMN and iron-sulfur (Fe-S) centers, to quinones in the respiratory chain. The immediate electron acceptor for the enzyme in this species is believed to be ubiquinone. Couples the redox reaction to proton translocation (for every two electrons transferred, four hydrogen ions are translocated across the cytoplasmic membrane), and thus conserves the redox energy in a proton gradient. This Thermodesulfovibrio yellowstonii (strain ATCC 51303 / DSM 11347 / YP87) protein is NADH-quinone oxidoreductase subunit B 2.